The chain runs to 399 residues: S-adenosylmethionine synthase (399 aa).

Histidine 17 is a binding site for ATP. Residue aspartate 19 coordinates Mg(2+). A K(+)-binding site is contributed by glutamate 45. Glutamate 58 and glutamine 101 together coordinate L-methionine. The flexible loop stretch occupies residues 101–111 (QSADIAMGVDQ). ATP-binding positions include 177–179 (DGK), 244–245 (RF), aspartate 253, 259–260 (RK), alanine 276, and lysine 280. Aspartate 253 contacts L-methionine. Lysine 284 serves as a coordination point for L-methionine.

Belongs to the AdoMet synthase family. As to quaternary structure, homotetramer; dimer of dimers. The cofactor is Mg(2+). Requires K(+) as cofactor.

The protein localises to the cytoplasm. The enzyme catalyses L-methionine + ATP + H2O = S-adenosyl-L-methionine + phosphate + diphosphate. Its pathway is amino-acid biosynthesis; S-adenosyl-L-methionine biosynthesis; S-adenosyl-L-methionine from L-methionine: step 1/1. Functionally, catalyzes the formation of S-adenosylmethionine (AdoMet) from methionine and ATP. The overall synthetic reaction is composed of two sequential steps, AdoMet formation and the subsequent tripolyphosphate hydrolysis which occurs prior to release of AdoMet from the enzyme. The chain is S-adenosylmethionine synthase from Bacillus cereus (strain ATCC 10987 / NRS 248).